The chain runs to 581 residues: Phosphoglucomutase, cytoplasmic (581 aa).

Basic and acidic residues predominate over residues 1-11; sequence MVFSVAKKDTT. A disordered region spans residues 1–20; sequence MVFSVAKKDTTPYEGQKPGT. Residues Arg24 and Ser123 each coordinate alpha-D-glucose 1,6-bisphosphate. Ser123 serves as the catalytic Phosphoserine intermediate. Mg(2+) is bound by residues Ser123, Asp298, Asp300, and Asp302. The residue at position 123 (Ser123) is a Phosphoserine. Residues Asp302, Arg303, Thr366, Glu385, Ser387, and Lys398 each coordinate alpha-D-glucose 1,6-bisphosphate.

This sequence belongs to the phosphohexose mutase family. Monomer. Requires Mg(2+) as cofactor.

It localises to the cytoplasm. It carries out the reaction alpha-D-glucose 1-phosphate = alpha-D-glucose 6-phosphate. It catalyses the reaction O-phospho-L-seryl-[protein] + alpha-D-glucose 1-phosphate = alpha-D-glucose 1,6-bisphosphate + L-seryl-[protein]. The catalysed reaction is alpha-D-glucose 1,6-bisphosphate + L-seryl-[protein] = O-phospho-L-seryl-[protein] + alpha-D-glucose 6-phosphate. Its function is as follows. Catalyzes the reversible isomerization of alpha-D-glucose 1-phosphate to alpha-D-glucose 6-phosphate. The mechanism proceeds via the intermediate compound alpha-D-glucose 1,6-bisphosphate. This enzyme participates in both the breakdown and synthesis of glucose. The polypeptide is Phosphoglucomutase, cytoplasmic (PGM1) (Bromus inermis (Smooth brome grass)).